The following is a 436-amino-acid chain: Homeobox protein PKNOX1 (436 aa).

Residues 24–49 (LKTEQDPNCSEPDVEGVSPPPVGSQT) form a disordered region. Phosphoserine is present on residues Ser-33 and Ser-41. Positions 80 to 163 (GSEGTTSASF…MNSETLLSGE (84 aa)) constitute an MEIS N-terminal domain. The segment at residues 259–321 (SKNKRGVLPK…NARRRILQPM (63 aa)) is a DNA-binding region (homeobox; TALE-type). The tract at residues 401–436 (AEQSEDDSVDSTGDGGAALAPGHLGGLVLENSDSLQ) is disordered.

Belongs to the TALE/MEIS homeobox family. As to quaternary structure, interacts with MN1.

It localises to the nucleus. In terms of biological role, activates transcription in the presence of PBX1A and HOXA1. In Bos taurus (Bovine), this protein is Homeobox protein PKNOX1.